We begin with the raw amino-acid sequence, 380 residues long: Epoxyqueuosine reductase (380 aa).

Catalysis depends on D139, which acts as the Proton donor. The region spanning 181 to 213 (IPFEPDDPLLDSCGDCTICVDRCPTSALVGNGQ) is the 4Fe-4S ferredoxin-type 1 domain. The [4Fe-4S] cluster site is built by C193, C196, C199, C203, C219, C245, C248, and C252. Positions 234–263 (YRYKIGNRLYGCDTCQQVCPKNRGINTEQD) constitute a 4Fe-4S ferredoxin-type 2 domain.

Belongs to the QueG family. As to quaternary structure, monomer. Cob(II)alamin is required as a cofactor. The cofactor is [4Fe-4S] cluster.

The protein resides in the cytoplasm. The catalysed reaction is epoxyqueuosine(34) in tRNA + AH2 = queuosine(34) in tRNA + A + H2O. It functions in the pathway tRNA modification; tRNA-queuosine biosynthesis. Its function is as follows. Catalyzes the conversion of epoxyqueuosine (oQ) to queuosine (Q), which is a hypermodified base found in the wobble positions of tRNA(Asp), tRNA(Asn), tRNA(His) and tRNA(Tyr). This is Epoxyqueuosine reductase from Staphylococcus aureus (strain NCTC 8325 / PS 47).